A 1106-amino-acid chain; its full sequence is Probable ATP-citrate synthase (1106 aa).

Asparagine 358, threonine 360, and arginine 391 together coordinate citrate. The segment covering 442–459 (APQTTGQFLLSPERNTGG) has biased composition (polar residues). The tract at residues 442-478 (APQTTGQFLLSPERNTGGTERAPPSPAANATPTEHPL) is disordered. Residues 701–721 (VIRY…EVGG) and 752–778 (ITSE…KNAA) contribute to the ATP site. Glutamate 718 is a binding site for Mg(2+). Residue histidine 760 is the Tele-phosphohistidine intermediate of the active site. Residue 779–789 (LRASGALVPES) participates in CoA binding.

The protein in the N-terminal section; belongs to the succinate/malate CoA ligase beta subunit family. In the C-terminal section; belongs to the succinate/malate CoA ligase alpha subunit family. Homotetramer.

It is found in the cytoplasm. It catalyses the reaction oxaloacetate + acetyl-CoA + ADP + phosphate = citrate + ATP + CoA. Functionally, catalyzes the cleavage of citrate into oxaloacetate and acetyl-CoA, the latter serving as common substrate in multiple biochemical reactions in protein, carbohydrate and lipid metabolism. The sequence is that of Probable ATP-citrate synthase from Caenorhabditis elegans.